The sequence spans 490 residues: GDP-fucose protein O-fucosyltransferase 2 (490 aa).

The first 25 residues, 1–25 (MRGSWPRLGFPALLLLLHLLTGSDA), serve as a signal peptide directing secretion. N-linked (GlcNAc...) asparagine glycans are attached at residues Asn29 and Asn79. 81 to 85 (SEGFN) serves as a coordination point for GDP-beta-L-fucose. Glu82 functions as the Proton acceptor in the catalytic mechanism. The cysteines at positions 203 and 226 are disulfide-linked. Residue 336–338 (HLR) participates in GDP-beta-L-fucose binding. Residue Asn368 is glycosylated (N-linked (GlcNAc...) asparagine). GDP-beta-L-fucose-binding positions include Asp418 and 435–436 (TF). Cys459 and Cys466 are oxidised to a cystine.

Belongs to the glycosyltransferase 68 family.

It localises to the endoplasmic reticulum. The protein resides in the golgi apparatus. The enzyme catalyses L-seryl-[protein] + GDP-beta-L-fucose = 3-O-(alpha-L-fucosyl)-L-seryl-[protein] + GDP + H(+). The catalysed reaction is L-threonyl-[protein] + GDP-beta-L-fucose = 3-O-(alpha-L-fucosyl)-L-threonyl-[protein] + GDP + H(+). It participates in protein modification; protein glycosylation. With respect to regulation, does not require divalent metal ions for optimal activity. Its function is as follows. Catalyzes the reaction that attaches fucose through an O-glycosidic linkage to a conserved serine or threonine residue in the consensus sequence C1-X-X-S/T-C2 of thrombospondin type I repeats (TSRs) where C1 and C2 are the first and second cysteines of the repeat, respectively. O-fucosylates members of several protein families including the ADAMTS, the thrombospondin (TSP) and spondin families. The chain is GDP-fucose protein O-fucosyltransferase 2 from Drosophila melanogaster (Fruit fly).